A 293-amino-acid polypeptide reads, in one-letter code: ATP synthase gamma chain (293 aa).

The protein belongs to the ATPase gamma chain family. In terms of assembly, F-type ATPases have 2 components, CF(1) - the catalytic core - and CF(0) - the membrane proton channel. CF(1) has five subunits: alpha(3), beta(3), gamma(1), delta(1), epsilon(1). CF(0) has three main subunits: a, b and c.

Its subcellular location is the cell inner membrane. Functionally, produces ATP from ADP in the presence of a proton gradient across the membrane. The gamma chain is believed to be important in regulating ATPase activity and the flow of protons through the CF(0) complex. This Sinorhizobium fredii (strain NBRC 101917 / NGR234) protein is ATP synthase gamma chain.